A 398-amino-acid polypeptide reads, in one-letter code: Serine/threonine-protein phosphatase 2A activator (398 aa).

ATP-binding residues include Arg137, Thr142, and Gly143. Gly197 and Asp203 together coordinate Mg(2+). Pro293, Gln296, and His297 together coordinate ATP. Positions 343–352 (PVATAPPPPA) are enriched in pro residues. The disordered stretch occupies residues 343 to 398 (PVATAPPPPAESLSIEQNVGDSSSESSDNSVVLRPSTSSSSLVAAAEGSGDKPSKE). Low complexity predominate over residues 363–388 (DSSSESSDNSVVLRPSTSSSSLVAAA).

This sequence belongs to the PTPA-type PPIase family. In terms of assembly, associates with PP2A heterodimeric core enzyme PP2A(D), composed of a catalytic subunit (subunit C) and a constant regulatory subunit (PR65 or subunit A). Interacts with the catalytic subunit Pp4-19C of the serine/threonine-protein phosphatase 4 (PP4) complex; thereby mediating basal localization of the Miranda (Mira) complex; probably by facilitating the dephosphorylation of Mira.

It localises to the cytoplasm. Its subcellular location is the nucleus. The catalysed reaction is [protein]-peptidylproline (omega=180) = [protein]-peptidylproline (omega=0). Its function is as follows. PPIases accelerate the folding of proteins. It catalyzes the cis-trans isomerization of proline imidic peptide bonds in oligopeptides. Acts as a regulatory subunit for serine/threonine-protein phosphatase 2A (PP2A). Modulates PP2A activity or substrate specificity, probably by inducing a conformational change in the catalytic subunit, a proposed direct target of the PPIase. Acts as mediator for the basal localization of the Miranda (Mira) complex during mitosis of larval neuroblast asymmetric division. Associates with the phosphatase 4 (PP4) complex to mediate basal localization of Mira; probably by facilitating the dephosphorylation of Mira. Cortical association of Mira mediated by the PTPA-PP4 complex seems to be independent of aPKC activity. This is Serine/threonine-protein phosphatase 2A activator from Drosophila melanogaster (Fruit fly).